We begin with the raw amino-acid sequence, 212 residues long: MSSEVRRGRFITLEGIDGAGKSTHLSFIRDWLARHGVDAAFTREPGGTPLSEKIRDLLLDPGTVASLDAEALLAFAARQQHIAEVIEPALAAGRWLVSDRFTDSTYAFQGGGRGVPFERIRALEDWVQRGLQPDLTLLFDLPTEVAAGRMAGTRVPDRFEQEAADFHRRVRAAYLRRAEEAPQRIAVLDASRGIADIQADIVLHLERLLERG.

Residue 15–22 coordinates ATP; that stretch reads GIDGAGKS.

This sequence belongs to the thymidylate kinase family.

The enzyme catalyses dTMP + ATP = dTDP + ADP. Functionally, phosphorylation of dTMP to form dTDP in both de novo and salvage pathways of dTTP synthesis. This is Thymidylate kinase from Chromobacterium violaceum (strain ATCC 12472 / DSM 30191 / JCM 1249 / CCUG 213 / NBRC 12614 / NCIMB 9131 / NCTC 9757 / MK).